Reading from the N-terminus, the 957-residue chain is Valine--tRNA ligase (957 aa).

Residues Pro-42–His-52 carry the 'HIGH' region motif. Positions Lys-554–Ser-558 match the 'KMSKS' region motif. Lys-557 is a binding site for ATP. Residues Asp-890–Ala-956 are a coiled coil.

This sequence belongs to the class-I aminoacyl-tRNA synthetase family. ValS type 1 subfamily. In terms of assembly, monomer.

It is found in the cytoplasm. The catalysed reaction is tRNA(Val) + L-valine + ATP = L-valyl-tRNA(Val) + AMP + diphosphate. Functionally, catalyzes the attachment of valine to tRNA(Val). As ValRS can inadvertently accommodate and process structurally similar amino acids such as threonine, to avoid such errors, it has a 'posttransfer' editing activity that hydrolyzes mischarged Thr-tRNA(Val) in a tRNA-dependent manner. This Aliivibrio fischeri (strain ATCC 700601 / ES114) (Vibrio fischeri) protein is Valine--tRNA ligase.